The sequence spans 190 residues: Double zinc ribbon protein MJ0416 (190 aa).

The DZANK-type zinc-finger motif lies at 134–183 (CPNCNNYISDSWKYCAHCGAKLKEEEEEVLRCPNCKRPVQPEWIVCPYCG).

This is Double zinc ribbon protein MJ0416 from Methanocaldococcus jannaschii (strain ATCC 43067 / DSM 2661 / JAL-1 / JCM 10045 / NBRC 100440) (Methanococcus jannaschii).